The following is a 1025-amino-acid chain: Error-prone DNA polymerase (1025 aa).

It belongs to the DNA polymerase type-C family. DnaE2 subfamily.

The protein resides in the cytoplasm. The catalysed reaction is DNA(n) + a 2'-deoxyribonucleoside 5'-triphosphate = DNA(n+1) + diphosphate. DNA polymerase involved in damage-induced mutagenesis and translesion synthesis (TLS). It is not the major replicative DNA polymerase. This Alkalilimnicola ehrlichii (strain ATCC BAA-1101 / DSM 17681 / MLHE-1) protein is Error-prone DNA polymerase.